The sequence spans 303 residues: Small ribosomal subunit protein uS2 (303 aa).

Residues Ala258–Glu303 form a disordered region. The segment covering Ala294–Glu303 has biased composition (basic and acidic residues).

This sequence belongs to the universal ribosomal protein uS2 family.

This Bifidobacterium animalis subsp. lactis (strain AD011) protein is Small ribosomal subunit protein uS2.